The chain runs to 107 residues: MSAAAQVTDSTFKQEVLDSDVPVLVDFWAPWCGPCRMVAPVVDEIAQQYEGKIKVVKVNTDENPQVASQYGIRSIPTLMIFKGGQKVDMVVGAVPKTTLSQTLEKHL.

The Thioredoxin domain maps to 2–107 (SAAAQVTDST…TLSQTLEKHL (106 aa)). A disulfide bond links Cys32 and Cys35.

This sequence belongs to the thioredoxin family.

In terms of biological role, participates in various redox reactions through the reversible oxidation of its active center dithiol to a disulfide and catalyzes dithiol-disulfide exchange reactions. This Nostoc sp. (strain PCC 7120 / SAG 25.82 / UTEX 2576) protein is Thioredoxin 1 (trxA).